The following is a 127-amino-acid chain: Major sperm protein 10/36/56/76 (127 aa).

A2 bears the N-acetylalanine mark. Residues 9-126 (DIQTQPNAKI…RRKNLPIEYN (118 aa)) form the MSP domain.

As to expression, sperm.

The protein resides in the cell projection. Its subcellular location is the pseudopodium. The protein localises to the cytoplasm. It localises to the cytoskeleton. In terms of biological role, central component in molecular interactions underlying sperm crawling. Forms an extensive filament system that extends from sperm villipoda, along the leading edge of the pseudopod. The sequence is that of Major sperm protein 10/36/56/76 (msp-10) from Caenorhabditis elegans.